The sequence spans 313 residues: L-lactate dehydrogenase 1 (313 aa).

NAD(+) contacts are provided by residues Val-15, Asp-36, Lys-41, Tyr-66, and 80–81 (GA). 2 residues coordinate substrate: Gln-83 and Arg-89. Residues Ser-102, 119–121 (VSN), and Ser-144 contribute to the NAD(+) site. Position 121 to 124 (121 to 124 (NPVD)) interacts with substrate. Residue 149–152 (DTSR) coordinates substrate. Beta-D-fructose 1,6-bisphosphate contacts are provided by Arg-154 and His-169. His-176 acts as the Proton acceptor in catalysis. Tyr-222 is modified (phosphotyrosine). A substrate-binding site is contributed by Thr-231.

It belongs to the LDH/MDH superfamily. LDH family. In terms of assembly, homotetramer.

It is found in the cytoplasm. It catalyses the reaction (S)-lactate + NAD(+) = pyruvate + NADH + H(+). Its pathway is fermentation; pyruvate fermentation to lactate; (S)-lactate from pyruvate: step 1/1. Its activity is regulated as follows. Allosterically activated by fructose 1,6-bisphosphate (FBP). In terms of biological role, catalyzes the conversion of lactate to pyruvate. The protein is L-lactate dehydrogenase 1 of Clostridium acetobutylicum (strain ATCC 824 / DSM 792 / JCM 1419 / IAM 19013 / LMG 5710 / NBRC 13948 / NRRL B-527 / VKM B-1787 / 2291 / W).